Reading from the N-terminus, the 197-residue chain is Small ribosomal subunit protein uS4c (197 aa).

Positions 85-161 (MRLDNILFRL…TGKELANHLN (77 aa)) constitute an S4 RNA-binding domain.

It belongs to the universal ribosomal protein uS4 family. In terms of assembly, part of the 30S ribosomal subunit. Contacts protein S5. The interaction surface between S4 and S5 is involved in control of translational fidelity.

It is found in the plastid. One of the primary rRNA binding proteins, it binds directly to 16S rRNA where it nucleates assembly of the body of the 30S subunit. Functionally, with S5 and S12 plays an important role in translational accuracy. This Cuscuta sandwichiana (Kauna'oa) protein is Small ribosomal subunit protein uS4c (rps4).